A 193-amino-acid polypeptide reads, in one-letter code: Probable GTP-binding protein EngB (193 aa).

In terms of domain architecture, EngB-type G spans 22 to 193 (LLPEVALAGR…AAWEAIYRHL (172 aa)). GTP contacts are provided by residues 30–37 (GRSNVGKS), 57–61 (GKTQT), 75–78 (DVPG), 142–145 (TKLD), and 174–176 (FSS). Mg(2+)-binding residues include Ser37 and Thr59.

This sequence belongs to the TRAFAC class TrmE-Era-EngA-EngB-Septin-like GTPase superfamily. EngB GTPase family. Mg(2+) serves as cofactor.

Necessary for normal cell division and for the maintenance of normal septation. This is Probable GTP-binding protein EngB from Exiguobacterium sibiricum (strain DSM 17290 / CCUG 55495 / CIP 109462 / JCM 13490 / 255-15).